The sequence spans 218 residues: Dual specificity protein phosphatase TpbA (218 aa).

The signal sequence occupies residues 1–28 (MHRSPLAWLRLLLAAVLGAFLLGGPLHA). Residues 44–188 (DPSINLYRMS…YVRGADVDGL (145 aa)) form the Tyrosine-protein phosphatase domain. The Proton donor/acceptor role is filled by Asp-105. Cys-132 serves as the catalytic Phosphocysteine intermediate.

This sequence belongs to the protein-tyrosine phosphatase family.

The protein localises to the periplasm. It carries out the reaction O-phospho-L-tyrosyl-[protein] + H2O = L-tyrosyl-[protein] + phosphate. The enzyme catalyses O-phospho-L-threonyl-[protein] + H2O = L-threonyl-[protein] + phosphate. It catalyses the reaction O-phospho-L-seryl-[protein] + H2O = L-seryl-[protein] + phosphate. Its function is as follows. Phosphatase that regulates diverse phenotypes in P.aeruginosa via regulation of the concentration of cellular c-di-GMP. Acts by dephosphorylating the membrane-anchored diguanylate cyclase TpbB at tyrosine and serine/threonine sites, leading to inactivation of TpbB and reduced c-di-GMP production. In vitro shows phosphatase activity toward p-nitrophenyl phosphate (pNPP) and tyrosine phosphopeptides. Can efficiently dephosphorylate two phosphorylated peptides derived from the periplasmic domain of TpbB, with a strong preference for Tyr-48 over Tyr-62. The sequence is that of Dual specificity protein phosphatase TpbA from Pseudomonas aeruginosa (strain ATCC 15692 / DSM 22644 / CIP 104116 / JCM 14847 / LMG 12228 / 1C / PRS 101 / PAO1).